A 124-amino-acid chain; its full sequence is Histone H2A (124 aa).

Residues 1–18 (MSGRGKGGKAKGKSKSRS) show a composition bias toward basic residues. The disordered stretch occupies residues 1-23 (MSGRGKGGKAKGKSKSRSSRAGL). Ser2 bears the N-acetylserine mark. Position 2 is a phosphoserine (Ser2). Gln104 is modified (N5-methylglutamine).

It belongs to the histone H2A family. The nucleosome is a histone octamer containing two molecules each of H2A, H2B, H3 and H4 assembled in one H3-H4 heterotetramer and two H2A-H2B heterodimers. The octamer wraps approximately 147 bp of DNA. The N-terminal serine is acetylated. That serine is also phosphorylated in approximately 60% of the molecules isolated from erythrocytes.

It is found in the nucleus. The protein resides in the chromosome. Core component of nucleosome. Nucleosomes wrap and compact DNA into chromatin, limiting DNA accessibility to the cellular machineries which require DNA as a template. Histones thereby play a central role in transcription regulation, DNA repair, DNA replication and chromosomal stability. DNA accessibility is regulated via a complex set of post-translational modifications of histones, also called histone code, and nucleosome remodeling. The polypeptide is Histone H2A (Sipunculus nudus (Sipunculan worm)).